We begin with the raw amino-acid sequence, 198 residues long: uncharacterized protein (198 aa).

This is an uncharacterized protein from Caenorhabditis elegans.